A 469-amino-acid polypeptide reads, in one-letter code: Phenylalanine--tRNA ligase alpha subunit (469 aa).

Residues threonine 309, 348–350, and phenylalanine 388 contribute to the L-phenylalanine site; that span reads QLD. Position 390 (glutamate 390) interacts with Mg(2+).

The protein belongs to the class-II aminoacyl-tRNA synthetase family. Phe-tRNA synthetase alpha subunit type 2 subfamily. In terms of assembly, tetramer of two alpha and two beta subunits. It depends on Mg(2+) as a cofactor.

The protein localises to the cytoplasm. The catalysed reaction is tRNA(Phe) + L-phenylalanine + ATP = L-phenylalanyl-tRNA(Phe) + AMP + diphosphate + H(+). This Sulfurisphaera tokodaii (strain DSM 16993 / JCM 10545 / NBRC 100140 / 7) (Sulfolobus tokodaii) protein is Phenylalanine--tRNA ligase alpha subunit.